Here is a 381-residue protein sequence, read N- to C-terminus: MSNKQNIESEVSWVKSKGAFVHPSLEFSVIPDAGSCVLANNDINENTVLLKLPPNILINKRTCSRYSFRDKLTSFQFLSWLISEDVHSNLEISPYYTKALPQGFSFHPVTLTSDHPLWSILPDEVRNSLLERKNVMAFDYEQVKKFVSVDQPTFQWGWLCVNTRCLYYDTGSKNTEDHLTLAPIFEYFNHSPEAQTALINTRGTITIKSTRRIDKGEQIFLCYGPHGNDKLFTEYGFCLSNNPNISIQLDRFIEFDKWQQSFLQDHGYWNDYTCSLHGASFRTLVGVRTLLVSPSEKLNDASYDQTRRVLQYINGFSDGSRDRQDVEDYLKKVLQELLCEAEECKEKVKGISDGSYVFICAEQLWKDRIMCCQYLMEHSFE.

The region spanning Pro23–Gly224 is the SET domain. Tyr223 is an S-adenosyl-L-methionine binding site.

The protein belongs to the class V-like SAM-binding methyltransferase superfamily. RKM2 family.

It is found in the cytoplasm. The protein localises to the nucleus. Its subcellular location is the nucleolus. Its function is as follows. S-adenosyl-L-methionine-dependent protein-lysine N-methyltransferase that trimethylates 60S ribosomal protein L12 (rpl1201 and rpl1202) at 'Lys-4' and may dimethylate L12 also at 'Lys-40' and 'Lys-41'. Overexpression causes a severe growth defect. Has a role in meiosis. The sequence is that of Ribosomal lysine N-methyltransferase set11 (set11) from Schizosaccharomyces pombe (strain 972 / ATCC 24843) (Fission yeast).